The following is a 150-amino-acid chain: 3-dehydroquinate dehydratase (150 aa).

Residue tyrosine 26 is the Proton acceptor of the active site. Substrate contacts are provided by asparagine 77, histidine 83, and aspartate 90. Residue histidine 103 is the Proton donor of the active site. Substrate contacts are provided by residues 104–105 (LS) and arginine 114.

It belongs to the type-II 3-dehydroquinase family. As to quaternary structure, homododecamer.

It catalyses the reaction 3-dehydroquinate = 3-dehydroshikimate + H2O. The protein operates within metabolic intermediate biosynthesis; chorismate biosynthesis; chorismate from D-erythrose 4-phosphate and phosphoenolpyruvate: step 3/7. In terms of biological role, catalyzes a trans-dehydration via an enolate intermediate. This Photobacterium profundum (strain SS9) protein is 3-dehydroquinate dehydratase.